A 252-amino-acid polypeptide reads, in one-letter code: Hydroxyacylglutathione hydrolase (252 aa).

Residues H54, H56, D58, H59, H113, D132, and H170 each contribute to the Zn(2+) site.

The protein belongs to the metallo-beta-lactamase superfamily. Glyoxalase II family. In terms of assembly, monomer. Zn(2+) is required as a cofactor.

The enzyme catalyses an S-(2-hydroxyacyl)glutathione + H2O = a 2-hydroxy carboxylate + glutathione + H(+). Its pathway is secondary metabolite metabolism; methylglyoxal degradation; (R)-lactate from methylglyoxal: step 2/2. In terms of biological role, thiolesterase that catalyzes the hydrolysis of S-D-lactoyl-glutathione to form glutathione and D-lactic acid. The polypeptide is Hydroxyacylglutathione hydrolase (Thermosynechococcus vestitus (strain NIES-2133 / IAM M-273 / BP-1)).